A 270-amino-acid polypeptide reads, in one-letter code: Fibroblast growth factor 5 (270 aa).

An N-terminal signal peptide occupies residues 1 to 20 (MSLSLLLLLFLSHLILSAWA). The interval 26–84 (LAPKGQPGPAATGRNPGGAGGSSTSGGTTSSSSSSVSSAPGASPGIRGSGSEQGSFQWS) is disordered. Gly residues predominate over residues 40–49 (NPGGAGGSST). Over residues 50-70 (SGGTTSSSSSSVSSAPGASPG) the composition is skewed to low complexity. Over residues 75–84 (GSEQGSFQWS) the composition is skewed to polar residues. N112 is a glycosylation site (N-linked (GlcNAc...) asparagine). The tract at residues 237–257 (EKKKPPSHVKPKVPLSAPRKS) is disordered.

The protein belongs to the heparin-binding growth factors family. In terms of assembly, interacts with FGFR1 and FGFR2. Affinity between fibroblast growth factors (FGFs) and their receptors is increased by heparan sulfate glycosaminoglycans that function as coreceptors.

Its subcellular location is the secreted. In terms of biological role, plays an important role in the regulation of cell proliferation and cell differentiation. Required for normal regulation of the hair growth cycle. Functions as an inhibitor of hair elongation by promoting progression from anagen, the growth phase of the hair follicle, into catagen the apoptosis-induced regression phase. This chain is Fibroblast growth factor 5 (FGF5), found in Canis lupus familiaris (Dog).